Reading from the N-terminus, the 624-residue chain is Probable potassium transport system protein Kup (624 aa).

12 helical membrane-spanning segments follow: residues 16-36 (ALLTLGALGVVFGDIGTSPLY), 59-79 (IISMVLWTITLIVTVKYVMLV), 106-126 (FVAVAGMLGAALFYGDVVITP), 147-167 (FILPVSLAVLIAIFAIQPLGT), 174-194 (FGPIMLLWFVTLAGLGIPQII), 211-231 (LIVAEPFQAFVLLGAVVLTVT), 252-272 (WFCVVMPALILTYLGQGALVI), 292-312 (IPLVILATIATVIASQAVISG), 342-362 (IYMPLVNGLLFVSVMVVVLVF), 371-391 (AYGLAVTGTLVLVSVLYLIYV), 394-414 (TWWKTALFIVLIGIPEVLLFA), and 418-438 (TKIHDGGWLPLLIAAVLIVVM).

This sequence belongs to the HAK/KUP transporter (TC 2.A.72) family.

It is found in the cell membrane. It carries out the reaction K(+)(in) + H(+)(in) = K(+)(out) + H(+)(out). Transport of potassium into the cell. Likely operates as a K(+):H(+) symporter. The sequence is that of Probable potassium transport system protein Kup from Corynebacterium glutamicum (strain ATCC 13032 / DSM 20300 / JCM 1318 / BCRC 11384 / CCUG 27702 / LMG 3730 / NBRC 12168 / NCIMB 10025 / NRRL B-2784 / 534).